The sequence spans 255 residues: F-box/SPRY domain-containing protein 1 (255 aa).

The 49-residue stretch at 3–51 (DPVAALCNYNVLEVIFSYLELEDLSHCSQVCKSWYHFLNDENSDVWRWH) folds into the F-box domain. The B30.2/SPRY domain maps to 61-253 (LKSDLLSSVS…VSMVYLGTPL (193 aa)).

The protein belongs to the FBXO45/Fsn family. Component of an E3 ubiquitin ligase complex composed of hiw and Fsn.

It localises to the synapse. Its pathway is protein modification; protein ubiquitination. Required in the presynaptic motoneuron to down-regulate the levels of wnd and restrain synaptic terminal growth at the neuromuscular junction (NMJ). The chain is F-box/SPRY domain-containing protein 1 from Drosophila erecta (Fruit fly).